The following is a 103-amino-acid chain: Matrix Gla protein (103 aa).

The signal sequence occupies residues 1–19 (MRSLLLLTVLAALVVAILC). Glutamate 21 carries the post-translational modification 4-carboxyglutamate. Phosphoserine is present on residues serine 22, serine 25, and serine 28. One can recognise a Gla domain in the interval 51–97 (MAKAQERVREQRKPAYELNREACDDYKLCERYAMVYGYNAAYNRYFR). A 4-carboxyglutamate mark is found at glutamate 56, glutamate 60, glutamate 67, and glutamate 71. Residues cysteine 73 and cysteine 79 are joined by a disulfide bond.

It belongs to the osteocalcin/matrix Gla protein family. In terms of processing, requires vitamin K-dependent gamma-carboxylation for its function.

The protein resides in the secreted. Functionally, associates with the organic matrix of bone and cartilage. Thought to act as an inhibitor of bone formation. The polypeptide is Matrix Gla protein (MGP) (Oryctolagus cuniculus (Rabbit)).